The chain runs to 206 residues: Urease accessory protein UreG (206 aa).

11–18 (GPVGSGKT) serves as a coordination point for GTP.

This sequence belongs to the SIMIBI class G3E GTPase family. UreG subfamily. In terms of assembly, homodimer. UreD, UreF and UreG form a complex that acts as a GTP-hydrolysis-dependent molecular chaperone, activating the urease apoprotein by helping to assemble the nickel containing metallocenter of UreC. The UreE protein probably delivers the nickel.

It is found in the cytoplasm. Functionally, facilitates the functional incorporation of the urease nickel metallocenter. This process requires GTP hydrolysis, probably effectuated by UreG. This chain is Urease accessory protein UreG, found in Mycolicibacterium gilvum (strain PYR-GCK) (Mycobacterium gilvum (strain PYR-GCK)).